The sequence spans 162 residues: NADH-quinone oxidoreductase subunit C (162 aa).

The protein belongs to the complex I 30 kDa subunit family. In terms of assembly, NDH-1 is composed of 14 different subunits. Subunits NuoB, C, D, E, F, and G constitute the peripheral sector of the complex.

The protein resides in the cell inner membrane. It carries out the reaction a quinone + NADH + 5 H(+)(in) = a quinol + NAD(+) + 4 H(+)(out). Its function is as follows. NDH-1 shuttles electrons from NADH, via FMN and iron-sulfur (Fe-S) centers, to quinones in the respiratory chain. The immediate electron acceptor for the enzyme in this species is believed to be ubiquinone. Couples the redox reaction to proton translocation (for every two electrons transferred, four hydrogen ions are translocated across the cytoplasmic membrane), and thus conserves the redox energy in a proton gradient. This chain is NADH-quinone oxidoreductase subunit C, found in Geobacter metallireducens (strain ATCC 53774 / DSM 7210 / GS-15).